Reading from the N-terminus, the 1488-residue chain is Chromosome partition protein MukB (1488 aa).

34-41 is a binding site for ATP; that stretch reads GGNGAGKS. Coiled coils occupy residues 326–418, 444–472, and 509–602; these read LEAD…QYNQ, LDTFQAKEQEATEKLLSLEQKMSVAQTAH, and RHLA…QRAP. Positions 666–783 are flexible hinge; the sequence is PGGAEDQRLN…SLPIFGRAAR (118 aa). Coiled coils occupy residues 835–923, 977–1116, and 1209–1265; these read EAEI…AKLE, EMLS…AKAG, and VEAI…LQSV. A disordered region spans residues 1049-1074; it reads ADSGAEERARQRRDELHAQLSNNRSR. Residues 1051–1065 show a composition bias toward basic and acidic residues; it reads SGAEERARQRRDELH.

This sequence belongs to the SMC family. MukB subfamily. Homodimerization via its hinge domain. Binds to DNA via its C-terminal region. Interacts, and probably forms a ternary complex, with MukE and MukF via its C-terminal region. The complex formation is stimulated by calcium or magnesium. Interacts with tubulin-related protein FtsZ.

The protein localises to the cytoplasm. The protein resides in the nucleoid. Plays a central role in chromosome condensation, segregation and cell cycle progression. Functions as a homodimer, which is essential for chromosome partition. Involved in negative DNA supercoiling in vivo, and by this means organize and compact chromosomes. May achieve or facilitate chromosome segregation by condensation DNA from both sides of a centrally located replisome during cell division. The polypeptide is Chromosome partition protein MukB (Salmonella paratyphi A (strain ATCC 9150 / SARB42)).